The following is a 100-amino-acid chain: Co-chaperonin GroES (100 aa).

The protein belongs to the GroES chaperonin family. As to quaternary structure, heptamer of 7 subunits arranged in a ring. Interacts with the chaperonin GroEL.

The protein resides in the cytoplasm. Its function is as follows. Together with the chaperonin GroEL, plays an essential role in assisting protein folding. The GroEL-GroES system forms a nano-cage that allows encapsulation of the non-native substrate proteins and provides a physical environment optimized to promote and accelerate protein folding. GroES binds to the apical surface of the GroEL ring, thereby capping the opening of the GroEL channel. The protein is Co-chaperonin GroES of Mycobacterium marinum (strain ATCC BAA-535 / M).